The primary structure comprises 638 residues: Voltage-gated potassium channel KCNC2 (638 aa).

The Cytoplasmic segment spans residues 1–229 (MGKIENNERV…EDPYSSRAAR (229 aa)). The disordered stretch occupies residues 47–75 (LTAAGDKLQPLPPPLSPPPRPPPLSPVPS). The span at 56-72 (PLPPPLSPPPRPPPLSP) shows a compositional bias: pro residues. Residues His-124, Cys-130, Cys-151, and Cys-152 each contribute to the Zn(2+) site. A helical membrane pass occupies residues 230–248 (FIAFASLFFILVSITTFCL). N-linked (GlcNAc...) asparagine glycans are attached at residues Asn-259 and Asn-266. Residues 284 to 303 (YVEGVCVVWFTFEFLVRIVF) form a helical membrane-spanning segment. The Cytoplasmic segment spans residues 304–314 (SPNKLEFIKNL). The chain crosses the membrane as a helical span at residues 315–337 (LNIIDFVAILPFYLEVGLSGLSS). Residues 346 to 368 (FLRVVRFVRILRIFKLTRHFVGL) traverse the membrane as a helical; Voltage-sensor segment. Residues 369-381 (RVLGHTLRASTNE) are Cytoplasmic-facing. The helical transmembrane segment at 382-401 (FLLLIIFLALGVLIFATMIY) threads the bilayer. Positions 437, 438, 439, and 440 each coordinate K(+). Positions 437–442 (TLGYGD) match the Selectivity filter motif. The helical transmembrane segment at 451-473 (MLVGALCALAGVLTIAMPVPVIV) threads the bilayer. At 474 to 638 (NNFGMYYSLA…RSRSPIPSIL (165 aa)) the chain is on the cytoplasmic side. The disordered stretch occupies residues 538-572 (SVLSGDDSTGSEPPLSPPERLPIRRSSTRDKNRRG). Ser-564 is modified (phosphoserine; by PKA). Phosphoserine is present on Ser-600.

The protein belongs to the potassium channel family. C (Shaw) (TC 1.A.1.2) subfamily. Kv3.2/KCNC2 sub-subfamily. In terms of assembly, homotetramer and heterotetramer with other channel-forming alpha subunits, such as KCNC1. Interacts with KCNC1. Homotetramer or heterotetramer channel activity is regulated by association with modulating ancillary subunits such as KCNE1, KCNE2 and KCNE3, creating a functionally diverse range of channel complexes. Interacts with KCNE1, KCNE2 and KCNE3. In terms of processing, phosphorylated by PKA in cortical synaptosomes. cAMP-dependent phosphorylation inhibits channel activity. Histamine H2 receptor- and PKA-induced phosphorylation extends action potential spike duration, reduces action potential spike amplitude, sustains maximum firing frequency in hippocampal interneurons; also reduces the incidence of high-frequency oscillations in hippocampal CA3 pyramidal cell layers. As to expression, expressed in neurons of the visual cortex during postnatal development. Expressed in neurons of the globus pallidus at postnatal age day 7 (P7), onward. Expressed in thalamic relay neurons. Expressed in neurons in layer IV and deeper cortical layers of the neocortex. Expressed in hippocampal interneurons. Expressed in nonpyramidal interneurons in the basolateral amygdala. Expressed in retinal ganglion cells (at protein level). Widely expressed in the brain. Expressed in numerous thalamic relay neurons throughout the dorsal thalamus. Expressed in interneurons of the deep layers V-VI of the cerebral cortex, the CA1 and CA3 pyramidal and dentate gyrus (DG) granule cells of the hippocampus, in neurons of the caudate-putamen, globus pallidus and subthalamic nucleus. Also expressed in the optic layer of interior colliculus, the inferior colliculus, the red nucleus, the medial geniculate, the ventral lateral lemiscus, the reticulotegmental nucleus and in the deep cerebellar nuclei. Expressed in globus pallidus (GP) neurons.

The protein resides in the cell membrane. It is found in the membrane. Its subcellular location is the perikaryon. It localises to the cell projection. The protein localises to the axon. The protein resides in the synapse. It is found in the synaptosome. Its subcellular location is the dendrite. It localises to the postsynaptic cell membrane. The protein localises to the presynaptic cell membrane. The protein resides in the apical cell membrane. It is found in the basolateral cell membrane. It carries out the reaction K(+)(in) = K(+)(out). Inhibited by Stichodactyla helianthus peptide ShK. Inhibited by millimolar levels of tetraethylammonium (TEA). Contrary to other channels, inhibited only by millimolar levels of 4-aminopyridine (4-AP). In terms of biological role, voltage-gated potassium channel that mediates transmembrane potassium transport in excitable membranes, primarily in the brain. Contributes to the regulation of the fast action potential repolarization and in sustained high-frequency firing in neurons of the central nervous system. Homotetramer channels mediate delayed-rectifier voltage-dependent potassium currents that activate rapidly at high-threshold voltages and inactivate slowly. Forms tetrameric channels through which potassium ions pass in accordance with their electrochemical gradient. The channel alternates between opened and closed conformations in response to the voltage difference across the membrane. Can form functional homotetrameric channels and heterotetrameric channels that contain variable proportions of KCNC1, and possibly other family members as well; channel properties depend on the type of alpha subunits that are part of the channel. Channel properties may be modulated either by the association with ancillary subunits, such as KCNE1, KCNE2 and KCNE3 or indirectly by nitric oxide (NO) through a cGMP- and PKG-mediated signaling cascade, slowing channel activation and deactivation of delayed rectifier potassium channels. Contributes to fire sustained trains of very brief action potentials at high frequency in retinal ganglion cells, thalamocortical and suprachiasmatic nucleus (SCN) neurons and in hippocampal and neocortical interneurons. Sustained maximal action potential firing frequency in inhibitory hippocampal interneurons is negatively modulated by histamine H2 receptor activation in a cAMP- and protein kinase (PKA) phosphorylation-dependent manner. Plays a role in maintaining the fidelity of synaptic transmission in neocortical GABAergic interneurons by generating action potential (AP) repolarization at nerve terminals, thus reducing spike-evoked calcium influx and GABA neurotransmitter release. Required for long-range synchronization of gamma oscillations over distance in the neocortex. Contributes to the modulation of the circadian rhythm of spontaneous action potential firing in suprachiasmatic nucleus (SCN) neurons in a light-dependent manner. The chain is Voltage-gated potassium channel KCNC2 from Rattus norvegicus (Rat).